Consider the following 247-residue polypeptide: Homeobox protein BarH-like 1b (247 aa).

Disordered stretches follow at residues 118 to 138 (RGKL…GRRS) and 197 to 247 (GGGL…SQEE). The segment at residues 135-194 (GRRSRTVFTELQLMGLEKRFEKQKYLSTPDRIDLAESLGLSQLQVKTWYQNRRMKWKKIV) is a DNA-binding region (homeobox). Positions 223 to 234 (EQERARDAEKPP) are enriched in basic and acidic residues.

It belongs to the BAR homeobox family. As to quaternary structure, interacts with serum response factor (SRF). Expressed in smooth muscle cells of the upper digestive organs and their attached arteries and to craniofacial structures.

Its subcellular location is the nucleus. Its function is as follows. Transcription factor which is involved with the serum response factor (SRF) in the smooth muscle cell-specific transcription of the beta-tropomyosin gene in the upper digestive organs and their attached arteries. This chain is Homeobox protein BarH-like 1b (BARX1B), found in Gallus gallus (Chicken).